We begin with the raw amino-acid sequence, 189 residues long: Ribonuclease HII (189 aa).

The region spanning 1 to 189 is the RNase H type-2 domain; it reads MIAGVDEAGR…IAALLKNNKK (189 aa). A divalent metal cation-binding residues include D6, E7, and D98.

The protein belongs to the RNase HII family. Requires Mn(2+) as cofactor. The cofactor is Mg(2+).

The protein localises to the cytoplasm. The enzyme catalyses Endonucleolytic cleavage to 5'-phosphomonoester.. Endonuclease that specifically degrades the RNA of RNA-DNA hybrids. This is Ribonuclease HII from Dichelobacter nodosus (strain VCS1703A).